We begin with the raw amino-acid sequence, 660 residues long: Bifunctional polymyxin resistance protein ArnA (660 aa).

The segment at 1–304 is formyltransferase ArnAFT; sequence MKAVIFAYHD…TLGLVAGARL (304 aa). His-104 acts as the Proton donor; for formyltransferase activity in catalysis. (6R)-10-formyltetrahydrofolate contacts are provided by residues Arg-114 and 136 to 140; that span reads VKRAD. The dehydrogenase ArnADH stretch occupies residues 314-660; it reads RRIRVLILGV…RSVDVAERAS (347 aa). NAD(+) is bound by residues Asp-347 and 368-369; that span reads DI. Residues Ala-393, Tyr-398, and 432–433 contribute to the UDP-alpha-D-glucuronate site; that span reads TS. Glu-434 functions as the Proton acceptor; for decarboxylase activity in the catalytic mechanism. UDP-alpha-D-glucuronate contacts are provided by residues Arg-460, Asn-492, 526–535, and Tyr-613; that span reads KLIDGGQQKR. The active-site Proton donor; for decarboxylase activity is the Arg-619.

It in the N-terminal section; belongs to the Fmt family. UDP-L-Ara4N formyltransferase subfamily. The protein in the C-terminal section; belongs to the NAD(P)-dependent epimerase/dehydratase family. UDP-glucuronic acid decarboxylase subfamily. As to quaternary structure, homohexamer, formed by a dimer of trimers.

The enzyme catalyses UDP-alpha-D-glucuronate + NAD(+) = UDP-beta-L-threo-pentopyranos-4-ulose + CO2 + NADH. It catalyses the reaction UDP-4-amino-4-deoxy-beta-L-arabinose + (6R)-10-formyltetrahydrofolate = UDP-4-deoxy-4-formamido-beta-L-arabinose + (6S)-5,6,7,8-tetrahydrofolate + H(+). The protein operates within nucleotide-sugar biosynthesis; UDP-4-deoxy-4-formamido-beta-L-arabinose biosynthesis; UDP-4-deoxy-4-formamido-beta-L-arabinose from UDP-alpha-D-glucuronate: step 1/3. It functions in the pathway nucleotide-sugar biosynthesis; UDP-4-deoxy-4-formamido-beta-L-arabinose biosynthesis; UDP-4-deoxy-4-formamido-beta-L-arabinose from UDP-alpha-D-glucuronate: step 3/3. It participates in bacterial outer membrane biogenesis; lipopolysaccharide biosynthesis. Its function is as follows. Bifunctional enzyme that catalyzes the oxidative decarboxylation of UDP-glucuronic acid (UDP-GlcUA) to UDP-4-keto-arabinose (UDP-Ara4O) and the addition of a formyl group to UDP-4-amino-4-deoxy-L-arabinose (UDP-L-Ara4N) to form UDP-L-4-formamido-arabinose (UDP-L-Ara4FN). The modified arabinose is attached to lipid A and is required for resistance to polymyxin and cationic antimicrobial peptides. The chain is Bifunctional polymyxin resistance protein ArnA from Salmonella heidelberg (strain SL476).